Consider the following 240-residue polypeptide: ATP-dependent dethiobiotin synthetase BioD 1 (240 aa).

13–18 (DVGKTV) contacts ATP. Residue T17 coordinates Mg(2+). K38 is an active-site residue. S42 contributes to the substrate binding site. ATP-binding positions include D55, 116-119 (EGAG), 176-177 (NE), 205-207 (PYL), and E212. Residues D55 and E116 each coordinate Mg(2+).

It belongs to the dethiobiotin synthetase family. Homodimer. It depends on Mg(2+) as a cofactor.

Its subcellular location is the cytoplasm. It catalyses the reaction (7R,8S)-7,8-diammoniononanoate + CO2 + ATP = (4R,5S)-dethiobiotin + ADP + phosphate + 3 H(+). It functions in the pathway cofactor biosynthesis; biotin biosynthesis; biotin from 7,8-diaminononanoate: step 1/2. Catalyzes a mechanistically unusual reaction, the ATP-dependent insertion of CO2 between the N7 and N8 nitrogen atoms of 7,8-diaminopelargonic acid (DAPA, also called 7,8-diammoniononanoate) to form a ureido ring. The chain is ATP-dependent dethiobiotin synthetase BioD 1 from Yersinia pestis.